Here is a 60-residue protein sequence, read N- to C-terminus: UPF0434 protein NMCC_0628 (60 aa).

The protein belongs to the UPF0434 family.

This is UPF0434 protein NMCC_0628 from Neisseria meningitidis serogroup C (strain 053442).